Consider the following 378-residue polypeptide: Ribosomal RNA large subunit methyltransferase G (378 aa).

It belongs to the methyltransferase superfamily. RlmG family.

The protein resides in the cytoplasm. The catalysed reaction is guanosine(1835) in 23S rRNA + S-adenosyl-L-methionine = N(2)-methylguanosine(1835) in 23S rRNA + S-adenosyl-L-homocysteine + H(+). In terms of biological role, specifically methylates the guanine in position 1835 (m2G1835) of 23S rRNA. The chain is Ribosomal RNA large subunit methyltransferase G from Salmonella newport (strain SL254).